Reading from the N-terminus, the 60-residue chain is Large ribosomal subunit protein uL30 (60 aa).

The protein belongs to the universal ribosomal protein uL30 family. Part of the 50S ribosomal subunit.

The chain is Large ribosomal subunit protein uL30 from Shewanella denitrificans (strain OS217 / ATCC BAA-1090 / DSM 15013).